We begin with the raw amino-acid sequence, 167 residues long: UPF0179 protein PAE0681 (167 aa).

A disordered region spans residues 142–167 (PSPSGSSISATSQGPSRAPPSRRLLK). Positions 145 to 157 (SGSSISATSQGPS) are enriched in low complexity.

Belongs to the UPF0179 family.

The chain is UPF0179 protein PAE0681 from Pyrobaculum aerophilum (strain ATCC 51768 / DSM 7523 / JCM 9630 / CIP 104966 / NBRC 100827 / IM2).